The following is a 176-amino-acid chain: ADP-ribosylation factor-like protein 11 (176 aa).

Glycine 2 carries the N-myristoyl glycine lipid modification. Residues 19–26 (GLDSAGKT), 63–67 (DIGGQ), and 122–125 (NKQE) contribute to the GTP site.

Belongs to the small GTPase superfamily. Arf family.

Its function is as follows. May play a role in apoptosis. May act as a tumor suppressor. This chain is ADP-ribosylation factor-like protein 11 (Arl11), found in Mus musculus (Mouse).